A 400-amino-acid polypeptide reads, in one-letter code: D(3) dopamine receptor (400 aa).

At M1 to Y32 the chain is on the extracellular side. N-linked (GlcNAc...) asparagine glycosylation is found at N12 and N19. The chain crosses the membrane as a helical span at residues A33–L55. The Cytoplasmic segment spans residues K56–N65. Residues Y66 to Y88 form a helical membrane-spanning segment. At L89–D104 the chain is on the extracellular side. A glycan (N-linked (GlcNAc...) asparagine) is linked at N97. Cysteines 103 and 181 form a disulfide. Residues V105–I126 traverse the membrane as a helical segment. D110 is an eticlopride binding site. The Cytoplasmic segment spans residues D127–R149. Residues V150–F170 traverse the membrane as a helical segment. Over G171 to D187 the chain is Extracellular. N173 carries an N-linked (GlcNAc...) asparagine glycan. The helical transmembrane segment at F188 to A209 threads the bilayer. Over R210–Q329 the chain is Cytoplasmic. A helical membrane pass occupies residues M330 to L351. F345 and H349 together coordinate eticlopride. At N352–S366 the chain is on the extracellular side. Cysteines 355 and 358 form a disulfide. Residues A367–F386 traverse the membrane as a helical segment. Over N387 to C400 the chain is Cytoplasmic.

It belongs to the G-protein coupled receptor 1 family. As to quaternary structure, interacts with CLIC6. Interacts with GRK4. Interacts with PALM. Interacts with FLNA (via filamin repeat 21); increases PKA-mediated phosphorylation of FLNA. Phosphorylated by GRK4 (GRK4-alpha and GRK4-gamma). In terms of processing, palmitoylated. Brain.

It localises to the cell membrane. Its function is as follows. Dopamine receptor whose activity is mediated by G proteins which inhibit adenylyl cyclase. Promotes cell proliferation. The chain is D(3) dopamine receptor from Homo sapiens (Human).